The sequence spans 1499 residues: MMANWAEARPLLILIVLLGQFVSIKAQEEDEDEGYGEEIACTQNGQMYLNRDIWKPAPCQICVCDNGAILCDKIECQDVLDCADPVTPPGECCPVCSQTPGGGNTNFGRGRKGQKGEPGLVPVVTGIRGRPGPAGPPGSQGPRGERGPKGRPGPRGPQGIDGEPGVPGQPGAPGPPGHPSHPGPDGLSRPFSAQMAGLDEKSGLGSQVGLMPGSVGPVGPRGPQGLQGQQGGAGPTGPPGEPGDPGPMGPIGSRGPEGPPGKPGEDGEPGRNGNPGEVGFAGSPGARGFPGAPGLPGLKGHRGHKGLEGPKGEVGAPGSKGEAGPTGPMGAMGPLGPRGMPGERGRLGPQGAPGQRGAHGMPGKPGPMGPLGIPGSSGFPGNPGMKGEAGPTGARGPEGPQGQRGETGPPGPVGSPGLPGAIGTDGTPGAKGPTGSPGTSGPPGSAGPPGSPGPQGSTGPQGIRGQPGDPGVPGFKGEAGPKGEPGPHGIQGPIGPPGEEGKRGPRGDPGTVGPPGPVGERGAPGNRGFPGSDGLPGPKGAQGERGPVGSSGPKGSQGDPGRPGEPGLPGARGLTGNPGVQGPEGKLGPLGAPGEDGRPGPPGSIGIRGQPGSMGLPGPKGSSGDPGKPGEAGNAGVPGQRGAPGKDGEVGPSGPVGPPGLAGERGEQGPPGPTGFQGLPGPPGPPGEGGKPGDQGVPGDPGAVGPLGPRGERGNPGERGEPGITGLPGEKGMAGGHGPDGPKGSPGPSGTPGDTGPPGLQGMPGERGIAGTPGPKGDRGGIGEKGAEGTAGNDGARGLPGPLGPPGPAGPTGEKGEPGPRGLVGPPGSRGNPGSRGENGPTGAVGFAGPQGPDGQPGVKGEPGEPGQKGDAGSPGPQGLAGSPGPHGPNGVPGLKGGRGTQGPPGATGFPGSAGRVGPPGPAGAPGPAGPLGEPGKEGPPGLRGDPGSHGRVGDRGPAGPPGGPGDKGDPGEDGQPGPDGPPGPAGTTGQRGIVGMPGQRGERGMPGLPGPAGTPGKVGPTGATGDKGPPGPVGPPGSNGPVGEPGPEGPAGNDGTPGRDGAVGERGDRGDPGPAGLPGSQGAPGTPGPVGAPGDAGQRGDPGSRGPIGPPGRAGKRGLPGPQGPRGDKGDHGDRGDRGQKGHRGFTGLQGLPGPPGPNGEQGSAGIPGPFGPRGPPGPVGPSGKEGNPGPLGPIGPPGVRGSVGEAGPEGPPGEPGPPGPPGPPGHLTAALGDIMGHYDESMPDPLPEFTEDQAAPDDKNKTDPGVHATLKSLSSQIETMRSPDGSKKHPARTCDDLKLCHSAKQSGEYWIDPNQGSVEDAIKVYCNMETGETCISANPSSVPRKTWWASKSPDNKPVWYGLDMNRGSQFAYGDHQSPNTAITQMTFLRLLSKEASQNITYICKNSVGYMDDQAKNLKKAVVLKGANDLDIKAEGNIRFRYIVLQDTCSKRNGNVGKTVFEYRTQNVARLPIIDLAPVDVGGTDQEFGVEIGPVCFV.

Residues 1 to 26 (MMANWAEARPLLILIVLLGQFVSIKA) form the signal peptide. A VWFC domain is found at 39-97 (IACTQNGQMYLNRDIWKPAPCQICVCDNGAILCDKIECQDVLDCADPVTPPGECCPVCS). Residues 104 to 1268 (NTNFGRGRKG…DDKNKTDPGV (1165 aa)) form a disordered region. A compositionally biased stretch (pro residues) spans 170–182 (PGAPGPPGHPSHP). The span at 212 to 227 (PGSVGPVGPRGPQGLQ) shows a compositional bias: low complexity. Residues 236–248 (TGPPGEPGDPGPM) are compositionally biased toward pro residues. 3 positions are modified to hydroxyproline: proline 290, proline 293, and proline 296. Low complexity-rich tracts occupy residues 322–340 (EAGPTGPMGAMGPLGPRGM) and 427–443 (TPGAKGPTGSPGTSGPP). A Cell attachment site motif is present at residues 506–508 (RGD). Low complexity-rich tracts occupy residues 604–626 (SIGIRGQPGSMGLPGPKGSSGDP) and 694–709 (DQGVPGDPGAVGPLGP). Hydroxyproline occurs at positions 611 and 617. Over residues 710–721 (RGERGNPGERGE) the composition is skewed to basic and acidic residues. Residues 732–741 (GMAGGHGPDG) are compositionally biased toward gly residues. A compositionally biased stretch (low complexity) spans 742-758 (PKGSPGPSGTPGDTGPP). Residues 776–787 (KGDRGGIGEKGA) show a composition bias toward basic and acidic residues. The span at 826–841 (PPGSRGNPGSRGENGP) shows a compositional bias: low complexity. The span at 894–903 (GLKGGRGTQG) shows a compositional bias: gly residues. Proline 919 is subject to 3-hydroxyproline; partial. Over residues 919–929 (PPGPAGAPGPA) the composition is skewed to pro residues. 6 consecutive short sequence motifs (cell attachment site) follow at residues 944–946 (RGD), 1067–1069 (RGD), 1070–1072 (RGD), 1100–1102 (RGD), 1127–1129 (RGD), and 1136–1138 (RGD). Residues 1063 to 1072 (AVGERGDRGD) show a composition bias toward basic and acidic residues. Over residues 1093-1114 (APGDAGQRGDPGSRGPIGPPGR) the composition is skewed to low complexity. Residues 1127–1141 (RGDKGDHGDRGDRGQ) are compositionally biased toward basic and acidic residues. Proline 1156 is subject to 3-hydroxyproline; partial. Composition is skewed to pro residues over residues 1171 to 1181 (PFGPRGPPGPV) and 1211 to 1226 (EGPPGEPGPPGPPGPP). The propeptide at 1230–1499 (TAALGDIMGH…GVEIGPVCFV (270 aa)) is C-terminal propeptide. N-linked (GlcNAc...) asparagine glycosylation is present at asparagine 1262. In terms of domain architecture, Fibrillar collagen NC1 spans 1266–1499 (PGVHATLKSL…GVEIGPVCFV (234 aa)). 3 disulfides stabilise this stretch: cysteine 1296–cysteine 1328, cysteine 1336–cysteine 1497, and cysteine 1405–cysteine 1450. Ca(2+) is bound by residues aspartate 1314, asparagine 1316, glutamine 1317, and aspartate 1322. N-linked (GlcNAc...) asparagine glycosylation occurs at asparagine 1400.

Belongs to the fibrillar collagen family. As to quaternary structure, trimers of two alpha 1(V) and one alpha 2(V) chains in most tissues and trimers of one alpha 1(V), one alpha 2(V), and one alpha 3(V) chains in placenta. Prolines at the third position of the tripeptide repeating unit (G-X-P) are hydroxylated in some or all of the chains. Probably 3-hydroxylated on Pro-919 and Pro-1156 by LEPREL1.

The protein localises to the secreted. Its subcellular location is the extracellular space. It localises to the extracellular matrix. Type V collagen is a member of group I collagen (fibrillar forming collagen). It is a minor connective tissue component of nearly ubiquitous distribution. Type V collagen binds to DNA, heparan sulfate, thrombospondin, heparin, and insulin. Type V collagen is a key determinant in the assembly of tissue-specific matrices. In Homo sapiens (Human), this protein is Collagen alpha-2(V) chain (COL5A2).